The sequence spans 415 residues: Peptide chain release factor subunit 1-2 (415 aa).

This sequence belongs to the eukaryotic release factor 1 family. In terms of assembly, heterodimer of two subunits, one of which binds GTP.

It is found in the cytoplasm. Its function is as follows. Directs the termination of nascent peptide synthesis (translation) in response to the termination codons UAA, UAG and UGA. The sequence is that of Peptide chain release factor subunit 1-2 from Methanosarcina acetivorans (strain ATCC 35395 / DSM 2834 / JCM 12185 / C2A).